The chain runs to 118 residues: uncharacterized protein (118 aa).

The next 4 helical transmembrane spans lie at 5–20, 25–42, 53–73, and 83–103; these read IVFYLILLCLFISVVM, VIRTIANVICFIFVLLYF, ALAILSICFLFLVGICAFIIL, and LFFTGLETIAGILLIIVSLSI.

The protein resides in the cell membrane. This is an uncharacterized protein from Bacillus subtilis (strain 168).